We begin with the raw amino-acid sequence, 424 residues long: UPF0597 protein Sputw3181_2955 (424 aa).

This sequence belongs to the UPF0597 family.

The polypeptide is UPF0597 protein Sputw3181_2955 (Shewanella sp. (strain W3-18-1)).